The following is a 562-amino-acid chain: Arginine--tRNA ligase (562 aa).

Residues 122-132 (PNIAKPISMGH) carry the 'HIGH' region motif.

Belongs to the class-I aminoacyl-tRNA synthetase family. Monomer.

Its subcellular location is the cytoplasm. The catalysed reaction is tRNA(Arg) + L-arginine + ATP = L-arginyl-tRNA(Arg) + AMP + diphosphate. The protein is Arginine--tRNA ligase of Pediococcus pentosaceus (strain ATCC 25745 / CCUG 21536 / LMG 10740 / 183-1w).